Consider the following 820-residue polypeptide: Protein bicaudal D homolog 2 (820 aa).

An N-acetylserine modification is found at S2. A coiled-coil region spans residues E20–S270. Residues E25 to R400 form an interaction with DYNLL1, DYNC1H1, DYNC1I2, DCTN1 and DCTN2 region. S190, S224, and S320 each carry phosphoserine. The disordered stretch occupies residues S313–P332. A Phosphothreonine modification is found at T321. Residues S336–D595 form an interaction with KIF5A region. Residues S340–L539 adopt a coiled-coil conformation. S345 and S397 each carry phosphoserine. Disordered regions lie at residues R400 to Y427, Q563 to L582, V591 to R618, and H799 to L820. Positions A404–G424 are enriched in basic and acidic residues. Phosphoserine occurs at positions 570 and 578. An interaction with RANBP2 region spans residues L586–L820. T598 carries the post-translational modification Phosphothreonine. Residues S602 to S614 show a composition bias toward low complexity. The stretch at D662–R804 forms a coiled coil. The tract at residues D662–A810 is interaction with RAB6A. At S819 the chain carries Phosphoserine.

The protein belongs to the BicD family. In terms of assembly, part of a tripartite complex with dynein and dynactin, acts an adapter linking the dynein motor complex and dynactin. Interacts with CPNE4 (via VWFA domain). Interacts with NEK9. Interacts with DCTN2. Interacts with RAB6A. Interacts with DNAI1. Interacts with DYNLL1, DYNC1H1, DYNC1I2 and DCTN1. Forms a complex with dynein and dynactin. The dynein-dynactin-BICD2 ternary complex (DDB) binds preferentially to tyrosinated microtubules than to detyrosinated microtubules. Interacts with RANBP2, RAB6A and KIF5A. Interacts with KIF1C. Post-translationally, phosphorylated by NEK9 in vitro. Ubiquitously expressed with high expression in the spinal cord.

The protein resides in the golgi apparatus. The protein localises to the cytoplasm. It localises to the cytoskeleton. Its subcellular location is the nucleus. It is found in the nuclear pore complex. The protein resides in the nucleus envelope. Acts as an adapter protein linking the dynein motor complex to various cargos and converts dynein from a non-processive to a highly processive motor in the presence of dynactin. Facilitates and stabilizes the interaction between dynein and dynactin and activates dynein processivity (the ability to move along a microtubule for a long distance without falling off the track). Facilitates the binding of RAB6A to the Golgi by stabilizing its GTP-bound form. Regulates coat complex coatomer protein I (COPI)-independent Golgi-endoplasmic reticulum transport via its interaction with RAB6A and recruitment of the dynein-dynactin motor complex. Contributes to nuclear and centrosomal positioning prior to mitotic entry through regulation of both dynein and kinesin-1. During G2 phase of the cell cycle, associates with RANBP2 at the nuclear pores and recruits dynein and dynactin to the nuclear envelope to ensure proper positioning of the nucleus relative to centrosomes prior to the onset of mitosis. The protein is Protein bicaudal D homolog 2 (Bicd2) of Mus musculus (Mouse).